The primary structure comprises 178 residues: Small ribosomal subunit protein uS5 (178 aa).

The S5 DRBM domain occupies 15 to 78 (FEEKIIEIRR…SAAKRNIIEV (64 aa)).

It belongs to the universal ribosomal protein uS5 family. In terms of assembly, part of the 30S ribosomal subunit. Contacts proteins S4 and S8.

Its function is as follows. With S4 and S12 plays an important role in translational accuracy. Located at the back of the 30S subunit body where it stabilizes the conformation of the head with respect to the body. The polypeptide is Small ribosomal subunit protein uS5 (Thermotoga sp. (strain RQ2)).